We begin with the raw amino-acid sequence, 228 residues long: 3,4-dihydroxy-2-butanone 4-phosphate synthase (228 aa).

Residues 37–38 (RE), Asp42, 150–154 (RPGHT), and Glu174 contribute to the D-ribulose 5-phosphate site. Glu38 is a Mg(2+) binding site. His153 contributes to the Mg(2+) binding site.

It belongs to the DHBP synthase family. In terms of assembly, homodimer. The cofactor is Mg(2+). Mn(2+) is required as a cofactor.

It carries out the reaction D-ribulose 5-phosphate = (2S)-2-hydroxy-3-oxobutyl phosphate + formate + H(+). It functions in the pathway cofactor biosynthesis; riboflavin biosynthesis; 2-hydroxy-3-oxobutyl phosphate from D-ribulose 5-phosphate: step 1/1. Catalyzes the conversion of D-ribulose 5-phosphate to formate and 3,4-dihydroxy-2-butanone 4-phosphate. The sequence is that of 3,4-dihydroxy-2-butanone 4-phosphate synthase from Chloroherpeton thalassium (strain ATCC 35110 / GB-78).